A 498-amino-acid polypeptide reads, in one-letter code: Neuronal acetylcholine receptor subunit beta-4 (498 aa).

Positions 1 to 21 (MRRAPSLVLFFLVALCGRGNC) are cleaved as a signal peptide. Over 22–239 (RVANAEEKLM…RKPLFYTINL (218 aa)) the chain is Extracellular. N-linked (GlcNAc...) asparagine glycans are attached at residues asparagine 36, asparagine 93, asparagine 138, and asparagine 166. A disulfide bridge links cysteine 153 with cysteine 167. A helical membrane pass occupies residues 240–255 (IIPCVLTTLLAILVFY). Over 256–261 (LPSDCG) the chain is Cytoplasmic. Residue glutamate 262 coordinates Na(+). Residues 262-277 (EKMTLCISVLLALTFF) form a helical membrane-spanning segment. Residues 278–296 (LLLISKIVPPTSLDVPLIG) lie on the Extracellular side of the membrane. A helical membrane pass occupies residues 297-321 (KYLMFTMVLVTFSIVTSVCVLNVHH). The Cytoplasmic segment spans residues 322-454 (RSPSTHTMAP…QSVVEDWKYV (133 aa)). Residues 357-377 (ARAFPPSKSCVTKPEATATST) are disordered. The chain crosses the membrane as a helical span at residues 455–478 (AMVVDRLFLWVFMFVCVLGTVGLF). The Extracellular segment spans residues 479–498 (LPPLFQTHAASEGPYAAQRD).

Belongs to the ligand-gated ion channel (TC 1.A.9) family. Acetylcholine receptor (TC 1.A.9.1) subfamily. Beta-4/CHRNB4 sub-subfamily. Neuronal AChR is composed of two different types of subunits: alpha and beta. CHRNB4/Beta-4 subunit can be combined to CHRNA2/alpha-2, CHRNA3/alpha-3 or CHRNA4/alpha-4, CHRNA5/alpha-5 and CHRNB3/beta-3 to give rise to functional receptors. Forms stoichiometries such as (CHRNA3)2:(CHRNB4)3 or (CHRNA3:CHRNB4)2:CHRNB3. Interacts with RIC3; which is required for proper folding and assembly. Interacts with LYPD6.

It localises to the synaptic cell membrane. It is found in the cell membrane. The catalysed reaction is Ca(2+)(in) = Ca(2+)(out). It carries out the reaction K(+)(in) = K(+)(out). It catalyses the reaction Na(+)(in) = Na(+)(out). With respect to regulation, activated by a myriad of ligands such as acetylcholine, cytisine, nicotine, choline and epibatidine. The heteropentamer CHRNA3:CHRNB4 activity is blocked by the alpha-conotoxin ImI and AuIB. Component of neuronal acetylcholine receptors (nAChRs) that function as pentameric, ligand-gated cation channels with high calcium permeability among other activities. nAChRs are excitatory neurotrasnmitter receptors formed by a collection of nAChR subunits known to mediate synaptic transmission in the nervous system and the neuromuscular junction. Each nAchR subunit confers differential attributes to channel properties, including activation, deactivation and desensitization kinetics, pH sensitivity, cation permeability, and binding to allosteric modulators. CHRNB4 forms heteropentameric neuronal acetylcholine receptors with CHRNA2, CHRNA3 and CHRNA4, as well as CHRNA5 and CHRNB3 as accesory subunits. CHRNA3:CHRNB4 being predominant in neurons of the autonomic ganglia, it is known as ganglionic nicotinic receptor. CHRNA3:CHRNB4 or CHRNA3:CHRNA5:CHRNB4 play also an important role in the habenulo-interpeduncular tract, modulating the mesolimbic dopamine system and affecting reward circuits and addiction. Hypothalamic CHRNA3:CHRNB4 nAChR activation by nicotine leads to activation of POMC neurons and a decrease in food intake. The polypeptide is Neuronal acetylcholine receptor subunit beta-4 (Homo sapiens (Human)).